Here is a 149-residue protein sequence, read N- to C-terminus: Large ribosomal subunit protein bL9 (149 aa).

It belongs to the bacterial ribosomal protein bL9 family.

Its function is as follows. Binds to the 23S rRNA. In Xanthomonas axonopodis pv. citri (strain 306), this protein is Large ribosomal subunit protein bL9.